Consider the following 434-residue polypeptide: Cobyrinate a,c-diamide synthase (434 aa).

The GATase cobBQ-type domain occupies 240–430 (KAYVAYDSAF…SHFHFSRTRR (191 aa)). C322 (nucleophile) is an active-site residue.

The protein belongs to the CobB/CbiA family. Mg(2+) serves as cofactor.

The catalysed reaction is cob(II)yrinate + 2 L-glutamine + 2 ATP + 2 H2O = cob(II)yrinate a,c diamide + 2 L-glutamate + 2 ADP + 2 phosphate + 2 H(+). The protein operates within cofactor biosynthesis; adenosylcobalamin biosynthesis; cob(II)yrinate a,c-diamide from sirohydrochlorin (anaerobic route): step 10/10. Functionally, catalyzes the ATP-dependent amidation of the two carboxylate groups at positions a and c of cobyrinate, using either L-glutamine or ammonia as the nitrogen source. The protein is Cobyrinate a,c-diamide synthase of Sulfolobus acidocaldarius (strain ATCC 33909 / DSM 639 / JCM 8929 / NBRC 15157 / NCIMB 11770).